The following is a 128-amino-acid chain: Large-conductance mechanosensitive channel (128 aa).

The next 2 membrane-spanning stretches (helical) occupy residues 10–30 (FAMR…GAFG) and 76–96 (GLFI…FMMV).

It belongs to the MscL family. Homopentamer.

The protein localises to the cell inner membrane. In terms of biological role, channel that opens in response to stretch forces in the membrane lipid bilayer. May participate in the regulation of osmotic pressure changes within the cell. The chain is Large-conductance mechanosensitive channel from Mannheimia succiniciproducens (strain KCTC 0769BP / MBEL55E).